We begin with the raw amino-acid sequence, 246 residues long: 1-(5-phosphoribosyl)-5-[(5-phosphoribosylamino)methylideneamino] imidazole-4-carboxamide isomerase (246 aa).

Aspartate 7 serves as the catalytic Proton acceptor. The active-site Proton donor is the aspartate 130.

This sequence belongs to the HisA/HisF family.

Its subcellular location is the cytoplasm. The catalysed reaction is 1-(5-phospho-beta-D-ribosyl)-5-[(5-phospho-beta-D-ribosylamino)methylideneamino]imidazole-4-carboxamide = 5-[(5-phospho-1-deoxy-D-ribulos-1-ylimino)methylamino]-1-(5-phospho-beta-D-ribosyl)imidazole-4-carboxamide. Its pathway is amino-acid biosynthesis; L-histidine biosynthesis; L-histidine from 5-phospho-alpha-D-ribose 1-diphosphate: step 4/9. This chain is 1-(5-phosphoribosyl)-5-[(5-phosphoribosylamino)methylideneamino] imidazole-4-carboxamide isomerase, found in Sodalis glossinidius (strain morsitans).